A 127-amino-acid chain; its full sequence is Anti-adapter protein IraD (127 aa).

This sequence belongs to the GpW/Gp25 family. IraD subfamily. In terms of assembly, interacts with RssB.

It is found in the cytoplasm. Its function is as follows. Inhibits RpoS proteolysis by regulating RssB activity, thereby increasing the stability of the sigma stress factor RpoS during oxidative stress. Its effect on RpoS stability is due to its interaction with RssB, which probably blocks the interaction of RssB with RpoS, and the consequent delivery of the RssB-RpoS complex to the ClpXP protein degradation pathway. The chain is Anti-adapter protein IraD from Escherichia coli (strain UTI89 / UPEC).